The primary structure comprises 459 residues: Nuclear distribution protein PAC1-2 (459 aa).

Residues 56–83 are a coiled coil; that stretch reads TSIVRLQKKIMDLESRNAALQTELANLT. 8 WD repeats span residues 108–149, 151–191, 195–244, 246–284, 306–348, 350–389, 394–438, and 440–459; these read SHRD…RTVK, HTRA…KNIR, GHDH…KTLR, HTAW…SDHK, QYLA…LGTL, GHDN…KCVK, AHER…DTPD, and QVRC…VFAD.

This sequence belongs to the WD repeat LIS1/nudF family. Self-associates. Interacts with NDL1 and dynein.

The protein localises to the cytoplasm. It is found in the cytoskeleton. Its subcellular location is the spindle pole. Its function is as follows. Positively regulates the activity of the minus-end directed microtubule motor protein dynein. May enhance dynein-mediated microtubule sliding by targeting dynein to the microtubule plus end. Required for nuclear migration during vegetative growth as well as development. Required for retrograde early endosome (EE) transport from the hyphal tip. Required for localization of dynein to the mitotic spindle poles. Recruits additional proteins to the dynein complex at SPBs. In Uncinocarpus reesii (strain UAMH 1704), this protein is Nuclear distribution protein PAC1-2.